A 363-amino-acid chain; its full sequence is Small ribosomal subunit biogenesis GTPase RsgA (363 aa).

Positions 112 to 268 (HQQVIAANID…LIDTPGMREL (157 aa)) constitute a CP-type G domain. Residues 157–160 (TKAD) and 210–218 (GSSGAGKST) each bind GTP. The Zn(2+) site is built by Cys291, Cys296, His298, and Cys304. The disordered stretch occupies residues 340–363 (RVAQNNRGKGSGKRPASIDRPGRR).

It belongs to the TRAFAC class YlqF/YawG GTPase family. RsgA subfamily. As to quaternary structure, monomer. Associates with 30S ribosomal subunit, binds 16S rRNA. The cofactor is Zn(2+).

It localises to the cytoplasm. Its function is as follows. One of several proteins that assist in the late maturation steps of the functional core of the 30S ribosomal subunit. Helps release RbfA from mature subunits. May play a role in the assembly of ribosomal proteins into the subunit. Circularly permuted GTPase that catalyzes slow GTP hydrolysis, GTPase activity is stimulated by the 30S ribosomal subunit. The chain is Small ribosomal subunit biogenesis GTPase RsgA from Xanthomonas oryzae pv. oryzae (strain PXO99A).